The following is a 542-amino-acid chain: Chaperonin GroEL 2 (542 aa).

Residues 30–33 (TLGP), Lys-51, 87–91 (DGTTT), Gly-415, and Asp-496 contribute to the ATP site.

This sequence belongs to the chaperonin (HSP60) family. Forms a cylinder of 14 subunits composed of two heptameric rings stacked back-to-back. Interacts with the co-chaperonin GroES.

Its subcellular location is the cytoplasm. It carries out the reaction ATP + H2O + a folded polypeptide = ADP + phosphate + an unfolded polypeptide.. Together with its co-chaperonin GroES, plays an essential role in assisting protein folding. The GroEL-GroES system forms a nano-cage that allows encapsulation of the non-native substrate proteins and provides a physical environment optimized to promote and accelerate protein folding. In Rhizobium meliloti (strain 1021) (Ensifer meliloti), this protein is Chaperonin GroEL 2.